The primary structure comprises 379 residues: GDP-mannose transporter 1 (379 aa).

Residues 1–39 (MTDNRKPEDYTIEMDKLGQNKNYQAPPPPPQPRSSTASS) are Cytoplasmic-facing. The disordered stretch occupies residues 17 to 38 (LGQNKNYQAPPPPPQPRSSTAS). Residues 40–60 (ISNNAALSVLAYCGSSILMTV) form a helical membrane-spanning segment. The Lumenal portion of the chain corresponds to 61–69 (MNKYVLSSD). A helical membrane pass occupies residues 70 to 90 (FNLNFFLLCVQSLVCIIAIQL). The Cytoplasmic segment spans residues 91 to 110 (CKACGLITYRDFNLDEARKW). Residues 111-133 (FPITLLLIGMIYTGSKALQFLSI) form a helical membrane-spanning segment. Topologically, residues 134-136 (PVY) are lumenal. The chain crosses the membrane as a helical span at residues 137–156 (TIFKNLTIILIAYGEVLWFG). The Cytoplasmic portion of the chain corresponds to 157-162 (GSVTNL). Residues 163 to 182 (TLFSFGLMVFSSIIAAWADI) traverse the membrane as a helical segment. Residues 183 to 198 (KHAIESSGDATSKVST) lie on the Lumenal side of the membrane. Residues 199–219 (LNAGYIWMLINCLCTSSYVLG) form a helical membrane-spanning segment. Residues 220-233 (MRKRIKLTNFKDFD) are Cytoplasmic-facing. The helical transmembrane segment at 234–254 (TMFYNNLLSIPVLIVCSGILE) threads the bilayer. The Lumenal portion of the chain corresponds to 255-272 (DWSPANVARNFPSADRNG). The helical transmembrane segment at 273–293 (IMFAMILSGLSTVFISYTSAW) threads the bilayer. Topologically, residues 294–301 (CVRVTSST) are cytoplasmic. The helical transmembrane segment at 302-322 (TYSMVGALNKLPIALSGLIFF) threads the bilayer. Residues 323-325 (DAP) are Lumenal-facing. A helical membrane pass occupies residues 326 to 346 (VTFPSVSAIMVGFVSGIVYAV). Topologically, residues 347–379 (AKIKQNAKPKVGILPTTNPVSASSQSMRDSLRS) are cytoplasmic.

This sequence belongs to the TPT transporter family. SLC35D subfamily. In terms of assembly, homooligomer.

The protein resides in the golgi apparatus membrane. Its subcellular location is the cytoplasmic vesicle membrane. The protein localises to the endoplasmic reticulum membrane. Its function is as follows. Involved in the import of GDP-mannose from the cytoplasm into the Golgi lumen. The chain is GDP-mannose transporter 1 (gmt1) from Emericella nidulans (strain FGSC A4 / ATCC 38163 / CBS 112.46 / NRRL 194 / M139) (Aspergillus nidulans).